The sequence spans 222 residues: Probable transaldolase (222 aa).

Catalysis depends on Lys-91, which acts as the Schiff-base intermediate with substrate.

It belongs to the transaldolase family. Type 3B subfamily.

It localises to the cytoplasm. The catalysed reaction is D-sedoheptulose 7-phosphate + D-glyceraldehyde 3-phosphate = D-erythrose 4-phosphate + beta-D-fructose 6-phosphate. Its pathway is carbohydrate degradation; pentose phosphate pathway; D-glyceraldehyde 3-phosphate and beta-D-fructose 6-phosphate from D-ribose 5-phosphate and D-xylulose 5-phosphate (non-oxidative stage): step 2/3. Its function is as follows. Transaldolase is important for the balance of metabolites in the pentose-phosphate pathway. This Chlorobium limicola (strain DSM 245 / NBRC 103803 / 6330) protein is Probable transaldolase.